The primary structure comprises 648 residues: Macrolide export ATP-binding/permease protein MacB (648 aa).

Over 1–272 the chain is Cytoplasmic; that stretch reads MTPLLELKDI…RALAANKMRT (272 aa). One can recognise an ABC transporter domain in the interval 5-243; the sequence is LELKDIRRSY…TGGTEPVVNT (239 aa). 41 to 48 contributes to the ATP binding site; the sequence is GASGSGKS. Residues 273-293 form a helical membrane-spanning segment; sequence LLTMLGIIIGIASVVSIVVVG. Residues 294 to 522 are Periplasmic-facing; that stretch reads DAAKQMVLAD…TVEKTTRTLQ (229 aa). Residues 523-543 form a helical membrane-spanning segment; sequence LFLTLVAVISLVVGGIGVMNI. The Cytoplasmic portion of the chain corresponds to 544 to 575; the sequence is MLVSVTERTREIGIRMAVGARASDVLQQFLIE. The helical transmembrane segment at 576–596 threads the bilayer; the sequence is AVLVCLVGGALGITLSLLIAF. Residues 597 to 610 are Periplasmic-facing; it reads TLQLFLPGWEIGFS. The chain crosses the membrane as a helical span at residues 611–631; the sequence is PLALLLAFLCSTVTGILFGWL. The Cytoplasmic portion of the chain corresponds to 632–648; the sequence is PARNAARLDPVDALARE.

It belongs to the ABC transporter superfamily. Macrolide exporter (TC 3.A.1.122) family. As to quaternary structure, homodimer. Part of the tripartite efflux system MacAB-TolC, which is composed of an inner membrane transporter, MacB, a periplasmic membrane fusion protein, MacA, and an outer membrane component, TolC. The complex forms a large protein conduit and can translocate molecules across both the inner and outer membranes. Interacts with MacA.

It localises to the cell inner membrane. With respect to regulation, ATPase activity is stimulated by interaction with MacA and inhibited by vanadate. Part of the tripartite efflux system MacAB-TolC. MacB is a non-canonical ABC transporter that contains transmembrane domains (TMD), which form a pore in the inner membrane, and an ATP-binding domain (NBD), which is responsible for energy generation. When overexpressed, the system confers resistance against macrolides composed of 14- and 15-membered lactones but no or weak resistance against 16-membered ones. In addition, the system could also transport R-LPS or a similar glycolipid. The sequence is that of Macrolide export ATP-binding/permease protein MacB from Escherichia coli (strain K12).